Reading from the N-terminus, the 98-residue chain is MIPDPRDVILRPVVSEKSYGLLDENVYTFIVHPDANKTQIKLAVQQIFSVRVLRVNTINRQGKRKRTKHGWGHRSATKRALVSLAPGDTIEIFGGPGA.

This sequence belongs to the universal ribosomal protein uL23 family. As to quaternary structure, part of the 50S ribosomal subunit. Contacts protein L29, and trigger factor when it is bound to the ribosome.

Its function is as follows. One of the early assembly proteins it binds 23S rRNA. One of the proteins that surrounds the polypeptide exit tunnel on the outside of the ribosome. Forms the main docking site for trigger factor binding to the ribosome. The sequence is that of Large ribosomal subunit protein uL23 from Frankia alni (strain DSM 45986 / CECT 9034 / ACN14a).